A 407-amino-acid chain; its full sequence is tRNA (guanine-N(7)-)-methyltransferase non-catalytic subunit wuho (407 aa).

WD repeat units follow at residues 83-124 (AIEV…ARLL), 171-210 (GHLSVVFDILWTDDQQHIITCDRDDKIRVTNYPATFDIHS), and 214-252 (GHKEFVSGLALLTEQHIVSSSGDKTLRVWNFIEGKELLI).

It belongs to the WD repeat TRM82 family. As to quaternary structure, forms a heterodimer with the catalytic subunit Mettl1. Interacts with mei-P26 and weakly interacts with bgcn; required for the function or formation of the mei-P26-bgcn-bam-sxl complex. Interacts with nanos; may be involved in mei-P26-dependent derepression of the BMP signaling pathway. Interacts with Myc; the interaction may be mediated by mei-P26 and may be involved in the regulation of ribosome biogenesis. In testis, it is present at high level in hub cells, a niche for germline stem cells of testis. Ubiquitously expressed in all testicular cells throughout spermatogenesis. Ubiquitously expressed in all germline and somatic cells of the ovary.

Its subcellular location is the nucleus. The protein resides in the cytoplasm. The protein operates within tRNA modification; N(7)-methylguanine-tRNA biosynthesis. In terms of biological role, required for the Mettl1-dependent formation of N(7)-methylguanine at position 46 (m7G46) in tRNA. In the Mettl1-wuho methyltransferase complex, it is required to stabilize and induce conformational changes of the catalytic subunit. Required for binding of nanos mRNA and repression of translation by the mei-P26-bgcn-bam-sxl complex. May cooperate with mei-P26 and nanos to derepress the BMP signaling pathway. May cooperate with mei-P26 to suppress expression of a subset of microRNAs. May cooperate with mei-P26 to regulate bam expression levels in germline cells during gametogenesis. Required to promote mitosis to meiosis transition during gametogenesis. May regulate germline cell division in part by regulating ribosome biogenesis. In Drosophila ananassae (Fruit fly), this protein is tRNA (guanine-N(7)-)-methyltransferase non-catalytic subunit wuho.